Here is a 535-residue protein sequence, read N- to C-terminus: UDP-glucuronosyltransferase 1A1 (535 aa).

The N-terminal stretch at methionine 1 to alanine 29 is a signal peptide. N-linked (GlcNAc...) asparagine glycosylation is found at asparagine 89, asparagine 297, and asparagine 435. The helical transmembrane segment at valine 493–tyrosine 509 threads the bilayer.

It belongs to the UDP-glycosyltransferase family. In terms of assembly, homodimers. Homooligomer. Interacts with UGT1A3, UGT1A4, UGT1A6, UGT1A7, UGT1A8, UGT1A9 and UGT1A10 to form heterodimers.

The protein resides in the endoplasmic reticulum membrane. The enzyme catalyses glucuronate acceptor + UDP-alpha-D-glucuronate = acceptor beta-D-glucuronoside + UDP + H(+). It carries out the reaction 17beta-estradiol + UDP-alpha-D-glucuronate = 17beta-estradiol 3-O-(beta-D-glucuronate) + UDP + H(+). The catalysed reaction is 2-hydroxyestrone + UDP-alpha-D-glucuronate = 2-hydroxyestrone 3-O-(beta-D-glucuronate) + UDP + H(+). It catalyses the reaction 2-hydroxy-17beta-estradiol + UDP-alpha-D-glucuronate = 2-hydroxy-17beta-estradiol 3-O-(beta-D-glucuronate) + UDP + H(+). The enzyme catalyses 2-methoxy-17beta-estradiol + UDP-alpha-D-glucuronate = 2-methoxy-17beta-estradiol 3-O-(beta-D-glucuronate) + UDP + H(+). It carries out the reaction 17alpha-estradiol + UDP-alpha-D-glucuronate = 17alpha-estradiol 3-O-(beta-D-glucuronate) + UDP + H(+). The catalysed reaction is 16beta,17beta-estriol + UDP-alpha-D-glucuronate = 16beta,17beta-estriol 16-O-(beta-D-glucuronate) + UDP + H(+). It catalyses the reaction losartan + UDP-alpha-D-glucuronate = losartan-2-N-beta-D-glucuronide + UDP. The enzyme catalyses prunetin + UDP-alpha-D-glucuronate = prunetin-4'-O-beta-D-glucuronide + UDP. It carries out the reaction SN-38 + UDP-alpha-D-glucuronate = SN-38 O-beta-D-glucuronide + UDP + H(+). The catalysed reaction is (4Z,15Z)-bilirubin IXalpha + UDP-alpha-D-glucuronate = (4Z,15Z)-bilirubin IXalpha C12-beta-D-glucuronoside + UDP. It catalyses the reaction (4Z,15Z)-bilirubin IXalpha + UDP-alpha-D-glucuronate = (4Z,15Z)-bilirubin IXalpha C8-beta-D-glucuronoside + UDP. The enzyme catalyses (4Z,15Z)-bilirubin IXalpha C8-beta-D-glucuronoside + UDP-alpha-D-glucuronate = (4Z,15Z)-bilirubin IXalpha C8,C12-beta-D-bisglucuronoside + UDP. It carries out the reaction (4Z,15Z)-bilirubin IXalpha C12-beta-D-glucuronoside + UDP-alpha-D-glucuronate = (4Z,15Z)-bilirubin IXalpha C8,C12-beta-D-bisglucuronoside + UDP. The catalysed reaction is 8-iso-prostaglandin F2alpha + UDP-alpha-D-glucuronate = 8-iso-prostaglandin F2alpha-glucuronide + UDP + H(+). It catalyses the reaction (5Z,8Z,11Z,14Z)-eicosatetraenoate + UDP-alpha-D-glucuronate = O-[(5Z),(8Z),(11Z),(14Z)-eicosatetraenoyl]-beta-D-glucuronate + UDP. The enzyme catalyses 15-hydroxy-(5Z,8Z,11Z,13E)-eicosatetraenoate + UDP-alpha-D-glucuronate = 15-O-(beta-D-glucuronosyl)-(5Z,8Z,11Z,14Z)-eicosatetraenoate + UDP + H(+). It carries out the reaction 20-hydroxy-(5Z,8Z,11Z,14Z)-eicosatetraenoate + UDP-alpha-D-glucuronate = 20-O-(beta-D-glucuronosyl)-(5Z,8Z,11Z,14Z)-eicosatetraenoate + UDP + H(+). The catalysed reaction is prostaglandin B1 + UDP-alpha-D-glucuronate = 15-O-(beta-D-glucuronosyl)-prostaglandin B1 + UDP + H(+). It catalyses the reaction (E)-ferulate + UDP-alpha-D-glucuronate = (E)-4-O-(beta-D-glucuronosyl)-ferulate + UDP + H(+). The enzyme catalyses (E)-ferulate + UDP-alpha-D-glucuronate = (E)-ferulic acid beta-D-glucuronate ester + UDP. Functionally, UDP-glucuronosyltransferase (UGT) that catalyzes phase II biotransformation reactions in which lipophilic substrates are conjugated with glucuronic acid to increase the metabolite's water solubility, thereby facilitating excretion into either the urine or bile. Essential for the elimination and detoxification of drugs, xenobiotics and endogenous compounds. Catalyzes the glucuronidation of endogenous estrogen hormones such as estradiol, estrone and estriol. Involved in the glucuronidation of bilirubin, a degradation product occurring in the normal catabolic pathway that breaks down heme in vertebrates. Involved in the glucuronidation of arachidonic acid (AA) and AA-derived eicosanoids including 15-HETE, 20-HETE, PGB1 and F2-isoprostane (8-iso-PGF2alpha). Involved in the glucuronidation of the phytochemical ferulic acid at the phenolic or the carboxylic acid group. Also catalyzes the glucuronidation the isoflavones genistein, daidzein, glycitein, formononetin, biochanin A and prunetin, which are phytoestrogens with anticancer and cardiovascular properties. Involved in the glucuronidation of the AGTR1 angiotensin receptor antagonist losartan, a drug which can inhibit the effect of angiotensin II. Involved in the biotransformation of 7-ethyl-10-hydroxycamptothecin (SN-38), the pharmacologically active metabolite of the anticancer drug irinotecan. The chain is UDP-glucuronosyltransferase 1A1 from Rattus norvegicus (Rat).